Reading from the N-terminus, the 157-residue chain is Transcription elongation factor GreA (157 aa).

Residues 47–75 (SGEYEDAKKAQALLEGRIRELKHLLSRAE) adopt a coiled-coil conformation.

This sequence belongs to the GreA/GreB family.

Functionally, necessary for efficient RNA polymerase transcription elongation past template-encoded arresting sites. The arresting sites in DNA have the property of trapping a certain fraction of elongating RNA polymerases that pass through, resulting in locked ternary complexes. Cleavage of the nascent transcript by cleavage factors such as GreA or GreB allows the resumption of elongation from the new 3'terminus. GreA releases sequences of 2 to 3 nucleotides. In Chloroflexus aurantiacus (strain ATCC 29366 / DSM 635 / J-10-fl), this protein is Transcription elongation factor GreA.